The chain runs to 115 residues: DNA-binding protein PH1060 (115 aa).

It belongs to the PDCD5 family.

The protein is DNA-binding protein PH1060 of Pyrococcus horikoshii (strain ATCC 700860 / DSM 12428 / JCM 9974 / NBRC 100139 / OT-3).